Consider the following 176-residue polypeptide: NAD(P)H-quinone oxidoreductase subunit 6, chloroplastic (176 aa).

The next 5 membrane-spanning stretches (helical) occupy residues 10–30 (FLLV…VLLP), 32–52 (PIYS…FYIL), 61–81 (AQLL…VMFI), 92–112 (LWTV…VSLI), and 152–172 (FFLP…GAIA).

Belongs to the complex I subunit 6 family. In terms of assembly, NDH is composed of at least 16 different subunits, 5 of which are encoded in the nucleus.

It is found in the plastid. It localises to the chloroplast thylakoid membrane. The catalysed reaction is a plastoquinone + NADH + (n+1) H(+)(in) = a plastoquinol + NAD(+) + n H(+)(out). It carries out the reaction a plastoquinone + NADPH + (n+1) H(+)(in) = a plastoquinol + NADP(+) + n H(+)(out). In terms of biological role, NDH shuttles electrons from NAD(P)H:plastoquinone, via FMN and iron-sulfur (Fe-S) centers, to quinones in the photosynthetic chain and possibly in a chloroplast respiratory chain. The immediate electron acceptor for the enzyme in this species is believed to be plastoquinone. Couples the redox reaction to proton translocation, and thus conserves the redox energy in a proton gradient. In Lactuca sativa (Garden lettuce), this protein is NAD(P)H-quinone oxidoreductase subunit 6, chloroplastic (ndhG).